The primary structure comprises 377 residues: Lipoyl synthase, mitochondrial (377 aa).

The [4Fe-4S] cluster site is built by C103, C108, C114, C134, C138, C141, and S349. The 220-residue stretch at 119–338 (EHGTQTATIM…EERGNELGFL (220 aa)) folds into the Radical SAM core domain.

It belongs to the radical SAM superfamily. Lipoyl synthase family. The cofactor is [4Fe-4S] cluster.

It localises to the mitochondrion. The catalysed reaction is [[Fe-S] cluster scaffold protein carrying a second [4Fe-4S](2+) cluster] + N(6)-octanoyl-L-lysyl-[protein] + 2 oxidized [2Fe-2S]-[ferredoxin] + 2 S-adenosyl-L-methionine + 4 H(+) = [[Fe-S] cluster scaffold protein] + N(6)-[(R)-dihydrolipoyl]-L-lysyl-[protein] + 4 Fe(3+) + 2 hydrogen sulfide + 2 5'-deoxyadenosine + 2 L-methionine + 2 reduced [2Fe-2S]-[ferredoxin]. Its pathway is protein modification; protein lipoylation via endogenous pathway; protein N(6)-(lipoyl)lysine from octanoyl-[acyl-carrier-protein]: step 2/2. Catalyzes the radical-mediated insertion of two sulfur atoms into the C-6 and C-8 positions of the octanoyl moiety bound to the lipoyl domains of lipoate-dependent enzymes, thereby converting the octanoylated domains into lipoylated derivatives. This chain is Lipoyl synthase, mitochondrial, found in Drosophila melanogaster (Fruit fly).